The sequence spans 263 residues: Proteasome subunit beta type-4 (263 aa).

M1 is subject to N-acetylmethionine. A propeptide spanning residues 1–44 (MEAFWESRTGHWAGGPAPGQFYRVPSTPSCLMDPMSAPARPITR) is cleaved from the precursor. S26 carries the post-translational modification Phosphoserine. Phosphotyrosine is present on Y101.

It belongs to the peptidase T1B family. The 26S proteasome consists of a 20S proteasome core and two 19S regulatory subunits. The 20S proteasome core is a barrel-shaped complex made of 28 subunits that are arranged in four stacked rings. The two outer rings are each formed by seven alpha subunits, and the two inner rings are formed by seven beta subunits. The proteolytic activity is exerted by three beta-subunits PSMB5, PSMB6 and PSMB7. Forms a ternary complex with SMAD1 and OAZ1 before PSMB4 is incorporated into the 20S proteasome. Interacts with PRPF19.

The protein localises to the cytoplasm. It localises to the nucleus. Its function is as follows. Non-catalytic component of the 20S core proteasome complex involved in the proteolytic degradation of most intracellular proteins. This complex plays numerous essential roles within the cell by associating with different regulatory particles. Associated with two 19S regulatory particles, forms the 26S proteasome and thus participates in the ATP-dependent degradation of ubiquitinated proteins. The 26S proteasome plays a key role in the maintenance of protein homeostasis by removing misfolded or damaged proteins that could impair cellular functions, and by removing proteins whose functions are no longer required. Associated with the PA200 or PA28, the 20S proteasome mediates ubiquitin-independent protein degradation. This type of proteolysis is required in several pathways including spermatogenesis (20S-PA200 complex) or generation of a subset of MHC class I-presented antigenic peptides (20S-PA28 complex). SMAD1/OAZ1/PSMB4 complex mediates the degradation of the CREBBP/EP300 repressor SNIP1. The sequence is that of Proteasome subunit beta type-4 (Psmb4) from Rattus norvegicus (Rat).